A 503-amino-acid polypeptide reads, in one-letter code: Aromatase (503 aa).

3 helical membrane-spanning segments follow: residues 19–39, 51–71, and 303–323; these read EVMP…LLVW, GYCM…MGIG, and MLIA…FLIA. Residues Asp-309 and Met-374 each coordinate substrate. Cys-437 is a binding site for heme.

Belongs to the cytochrome P450 family. It depends on heme as a cofactor.

The protein resides in the endoplasmic reticulum membrane. It localises to the microsome membrane. The enzyme catalyses testosterone + 3 reduced [NADPH--hemoprotein reductase] + 3 O2 = 17beta-estradiol + formate + 3 oxidized [NADPH--hemoprotein reductase] + 4 H2O + 4 H(+). It catalyses the reaction androst-4-ene-3,17-dione + 3 reduced [NADPH--hemoprotein reductase] + 3 O2 = estrone + formate + 3 oxidized [NADPH--hemoprotein reductase] + 4 H2O + 4 H(+). The catalysed reaction is androst-4-ene-3,17-dione + reduced [NADPH--hemoprotein reductase] + O2 = 19-hydroxyandrost-4-ene-3,17-dione + oxidized [NADPH--hemoprotein reductase] + H2O + H(+). It carries out the reaction 19-hydroxyandrost-4-ene-3,17-dione + reduced [NADPH--hemoprotein reductase] + O2 = 19-oxo-androst-4-ene-3,17-dione + oxidized [NADPH--hemoprotein reductase] + 2 H2O + H(+). The enzyme catalyses 19-oxo-androst-4-ene-3,17-dione + reduced [NADPH--hemoprotein reductase] + O2 = estrone + formate + oxidized [NADPH--hemoprotein reductase] + H2O + 2 H(+). It catalyses the reaction estrone + reduced [NADPH--hemoprotein reductase] + O2 = 2-hydroxyestrone + oxidized [NADPH--hemoprotein reductase] + H2O + H(+). The catalysed reaction is 17beta-hydroxy-5alpha-androstan-3-one + reduced [NADPH--hemoprotein reductase] + O2 = 17beta,19-dihydroxy-3-oxo-5alpha-androstanone + oxidized [NADPH--hemoprotein reductase] + H2O + H(+). It carries out the reaction 17beta,19-dihydroxy-3-oxo-5alpha-androstanone + reduced [NADPH--hemoprotein reductase] + O2 = 17beta-hydroxy-3,19-dioxo-5alpha-androstanone + oxidized [NADPH--hemoprotein reductase] + 2 H2O + H(+). The enzyme catalyses 17beta-hydroxy-3,19-dioxo-5alpha-androstanone + reduced [NADPH--hemoprotein reductase] + O2 = 17beta-hydroxy-3-oxo-19-nor-5alpha-androst-1-ene + formate + oxidized [NADPH--hemoprotein reductase] + H2O + 2 H(+). It functions in the pathway steroid hormone biosynthesis. Functionally, a cytochrome P450 monooxygenase that catalyzes the conversion of C19 androgens, androst-4-ene-3,17-dione (androstenedione) and testosterone to the C18 estrogens, estrone and estradiol, respectively. Catalyzes three successive oxidations of C19 androgens: two conventional oxidations at C19 yielding 19-hydroxy and 19-oxo/19-aldehyde derivatives, followed by a third oxidative aromatization step that involves C1-beta hydrogen abstraction combined with cleavage of the C10-C19 bond to yield a phenolic A ring and formic acid. Alternatively, the third oxidative reaction yields a 19-norsteroid and formic acid. Converts dihydrotestosterone to delta1,10-dehydro 19-nordihydrotestosterone and may play a role in homeostasis of this potent androgen. Also displays 2-hydroxylase activity toward estrone. Mechanistically, uses molecular oxygen inserting one oxygen atom into a substrate, and reducing the second into a water molecule, with two electrons provided by NADPH via cytochrome P450 reductase (CPR; NADPH-ferrihemoprotein reductase). The chain is Aromatase (CYP19A1) from Canis lupus familiaris (Dog).